We begin with the raw amino-acid sequence, 183 residues long: ATP-dependent protease subunit HslV (183 aa).

T7 is a catalytic residue. G162, C165, and T168 together coordinate Na(+).

Belongs to the peptidase T1B family. HslV subfamily. As to quaternary structure, a double ring-shaped homohexamer of HslV is capped on each side by a ring-shaped HslU homohexamer. The assembly of the HslU/HslV complex is dependent on binding of ATP.

Its subcellular location is the cytoplasm. It carries out the reaction ATP-dependent cleavage of peptide bonds with broad specificity.. With respect to regulation, allosterically activated by HslU binding. In terms of biological role, protease subunit of a proteasome-like degradation complex believed to be a general protein degrading machinery. This chain is ATP-dependent protease subunit HslV, found in Chromobacterium violaceum (strain ATCC 12472 / DSM 30191 / JCM 1249 / CCUG 213 / NBRC 12614 / NCIMB 9131 / NCTC 9757 / MK).